The primary structure comprises 323 residues: MVSSQIESEEKSLRIIFMGTPDFASSNLRALLAGPDQVVAVVTQPDRPKGRGKKLTSPPVKVIAEEAGLPVLQPTKVRTDEFLEALAAYAPDLIVVTAYGRILPKPILDLAPLGCINVHGSLLPKYRGAAPIQWAVIQGDDEVGVTTMQMDEGMDTGDILLRKIIIPSPDETAGTLFDKLAELGTSALLETIEGLKKGTIRAEAQDHAQATEAPMLSKNDGLIDWSRTATELESLIRGMDPWPSAFCFLEGKRLRLFMPEVSYQKTDAQPGAVLRAGRDGLLIATGKNCLLVKEIQPEGKKRMTVEAFLCGAKIGAETVLKTT.

121–124 lines the (6S)-5,6,7,8-tetrahydrofolate pocket; sequence SLLP.

This sequence belongs to the Fmt family.

It catalyses the reaction L-methionyl-tRNA(fMet) + (6R)-10-formyltetrahydrofolate = N-formyl-L-methionyl-tRNA(fMet) + (6S)-5,6,7,8-tetrahydrofolate + H(+). In terms of biological role, attaches a formyl group to the free amino group of methionyl-tRNA(fMet). The formyl group appears to play a dual role in the initiator identity of N-formylmethionyl-tRNA by promoting its recognition by IF2 and preventing the misappropriation of this tRNA by the elongation apparatus. The polypeptide is Methionyl-tRNA formyltransferase (Desulfotalea psychrophila (strain LSv54 / DSM 12343)).